Reading from the N-terminus, the 1297-residue chain is Insulin receptor-related protein (1297 aa).

The N-terminal stretch at 1 to 26 (MAVPSLWPWGACLPVIFLSLGFGLDT) is a signal peptide. Asn47 carries an N-linked (GlcNAc...) asparagine glycan. Intrachain disulfides connect Cys214/Cys222, Cys216/Cys228, Cys229/Cys237, Cys233/Cys246, Cys249/Cys258, Cys262/Cys274, Cys280/Cys300, Cys304/Cys317, and Cys320/Cys324. Asn311 carries an N-linked (GlcNAc...) asparagine glycan. N-linked (GlcNAc...) asparagine glycosylation is found at Asn411, Asn492, Asn528, Asn616, and Asn634. Fibronectin type-III domains lie at 483–603 (QTRT…TLPA) and 607–707 (VPQD…AQEA). Residues Cys657 and Cys864 are joined by a disulfide bond. Disordered regions lie at residues 666–687 (SNND…ESDC) and 732–758 (SINK…GNSS). Over residues 675–685 (EDGDPEAEMES) the composition is skewed to acidic residues. Over 747-921 (AAGPLRLGGN…PEEEDAGGLH (175 aa)) the chain is Extracellular. N-linked (GlcNAc...) asparagine glycans are attached at residues Asn756, Asn885, and Asn898. In terms of domain architecture, Fibronectin type-III 3 spans 818 to 913 (IPGKVAWEAS…SVAFYILGPE (96 aa)). A helical membrane pass occupies residues 922–943 (VLLTATPVGLTLLIVLAALGFF). Over 944–1297 (YGKKRNRTLY…CSPQNGGPGH (354 aa)) the chain is Cytoplasmic. The region spanning 979 to 1254 (ISIIRELGQG…SIQEELRPSF (276 aa)) is the Protein kinase domain. ATP contacts are provided by residues 985–993 (LGQGSFGMV) and Lys1013. The active-site Proton acceptor is Asp1115. Phosphotyrosine; by autocatalysis is present on residues Tyr1145 and Tyr1146. Residues 1267 to 1297 (GARGSLPTTDAEPDSSPTPRDCSPQNGGPGH) form a disordered region. Positions 1281–1297 (SSPTPRDCSPQNGGPGH) are enriched in polar residues.

Belongs to the protein kinase superfamily. Tyr protein kinase family. Insulin receptor subfamily. As to quaternary structure, probable tetramer of 2 alpha and 2 beta chains linked by disulfide bonds. The alpha chains contribute to the formation of the ligand-binding domain, while the beta chains carry the kinase domain. Post-translationally, autophosphorylated on tyrosine residues between pH 7.9 and pH 10.5.

It localises to the membrane. It carries out the reaction L-tyrosyl-[protein] + ATP = O-phospho-L-tyrosyl-[protein] + ADP + H(+). Receptor with tyrosine-protein kinase activity. Functions as a pH sensing receptor which is activated by increased extracellular pH. Activates an intracellular signaling pathway that involves IRS1 and AKT1/PKB. This is Insulin receptor-related protein (INSRR) from Homo sapiens (Human).